A 311-amino-acid polypeptide reads, in one-letter code: Malate dehydrogenase (311 aa).

NAD(+)-binding positions include 7–13 (GAAGGIG) and D34. Residues R81 and R87 each coordinate substrate. Residues N94 and 117 to 119 (ITN) each bind NAD(+). N119 and R153 together coordinate substrate. The active-site Proton acceptor is the H177. M227 lines the NAD(+) pocket.

The protein belongs to the LDH/MDH superfamily. MDH type 1 family. Homodimer.

It catalyses the reaction (S)-malate + NAD(+) = oxaloacetate + NADH + H(+). Functionally, catalyzes the reversible oxidation of malate to oxaloacetate. This Aeromonas salmonicida (strain A449) protein is Malate dehydrogenase.